The following is a 944-amino-acid chain: uncharacterized protein (944 aa).

This is an uncharacterized protein from Ureaplasma parvum serovar 3 (strain ATCC 700970).